The following is a 356-amino-acid chain: CMP-sialic acid transporter 2 (356 aa).

Over residues 1–24 the composition is skewed to basic and acidic residues; the sequence is MEYRRVKDQESYDVVSQKDIESPG. The segment at 1-44 is disordered; sequence MEYRRVKDQESYDVVSQKDIESPGERSLSSTSATSSLSTAGASK. Over 1 to 52 the chain is Cytoplasmic; sequence MEYRRVKDQESYDVVSQKDIESPGERSLSSTSATSSLSTAGASKGKNSWKLK. Positions 27–44 are enriched in low complexity; that stretch reads SLSSTSATSSLSTAGASK. The helical transmembrane segment at 53–73 threads the bilayer; it reads SIVTLALTLLTSSQAILIVWS. Residues 74 to 82 lie on the Lumenal side of the membrane; it reads KRAGKYEYS. A helical transmembrane segment spans residues 83 to 103; the sequence is VTTANFSVEALKCLLSLIALY. Over 104–125 the chain is Cytoplasmic; it reads RTWNSQGVTEDNRLSTSFDEVS. The chain crosses the membrane as a helical span at residues 126 to 146; it reads VYPIPAILYMVKNLLQYYIFA. Residues 147 to 149 are Lumenal-facing; the sequence is YVD. A helical membrane pass occupies residues 150-172; the sequence is APAYQILKNLNIISTGVLYRIIL. Over 173 to 175 the chain is Cytoplasmic; sequence KKK. The helical transmembrane segment at 176 to 196 threads the bilayer; sequence LSEIQWAAFILLCAGCTTAQL. At 197–211 the chain is on the lumenal side; it reads NPSSDHVLQTPIQGW. Residues 212–232 traverse the membrane as a helical segment; the sequence is VMAIVMALLSGFAGVYTEAII. Over 233–239 the chain is Cytoplasmic; it reads KKRPSRN. Residues 240-260 traverse the membrane as a helical segment; the sequence is INVQNFWLYIFGMLFNLVAIC. The Lumenal segment spans residues 261–277; the sequence is VQDFDAVMNKGFFHGYS. The chain crosses the membrane as a helical span at residues 278 to 298; the sequence is FITVLMILNHALSGIAVSMVM. Over 299–314 the chain is Cytoplasmic; sequence KYADNIVKVYSTSVAM. The helical transmembrane segment at 315–335 threads the bilayer; that stretch reads LLTAVVSVFLFGFHLSLAFFL. Residues 336 to 356 are Lumenal-facing; the sequence is GSTVVSVSVYLHSVGKPQPQK.

It belongs to the nucleotide-sugar transporter family. CMP-Sialate:CMP antiporter (TC 2.A.7.12) subfamily. In terms of tissue distribution, expressed in roots, leaves and stalks.

The protein resides in the golgi apparatus membrane. In terms of biological role, sugar transporter involved in the transport of CMP-sialic acid from the cytoplasm into the Golgi. May transport important nucleotide sugars such as CMP-Kdo (2-keto-3-deoxy-D-manno-octulosonic acid) in physiological conditions. This is CMP-sialic acid transporter 2 from Oryza sativa subsp. japonica (Rice).